Consider the following 341-residue polypeptide: Phenylalanine--tRNA ligase alpha subunit (341 aa).

Glu-254 lines the Mg(2+) pocket.

The protein belongs to the class-II aminoacyl-tRNA synthetase family. Phe-tRNA synthetase alpha subunit type 1 subfamily. As to quaternary structure, tetramer of two alpha and two beta subunits. Requires Mg(2+) as cofactor.

Its subcellular location is the cytoplasm. The catalysed reaction is tRNA(Phe) + L-phenylalanine + ATP = L-phenylalanyl-tRNA(Phe) + AMP + diphosphate + H(+). This is Phenylalanine--tRNA ligase alpha subunit (pheS) from Mycoplasma genitalium (strain ATCC 33530 / DSM 19775 / NCTC 10195 / G37) (Mycoplasmoides genitalium).